The primary structure comprises 866 residues: Leucine--tRNA ligase (866 aa).

Positions 59 to 69 (PYPSGDLHMGH) match the 'HIGH' region motif. Residues 393-421 (VPVIKTDPQTGEPLLPESAPLESPAETGQ) are disordered. Low complexity predominate over residues 404–418 (EPLLPESAPLESPAE). The 'KMSKS' region motif lies at 628 to 632 (AMSKS). Lys631 is an ATP binding site.

This sequence belongs to the class-I aminoacyl-tRNA synthetase family.

It localises to the cytoplasm. It catalyses the reaction tRNA(Leu) + L-leucine + ATP = L-leucyl-tRNA(Leu) + AMP + diphosphate. The chain is Leucine--tRNA ligase from Leifsonia xyli subsp. xyli (strain CTCB07).